A 150-amino-acid chain; its full sequence is Protein A151R (150 aa).

This sequence belongs to the asfivirus A151R family. As to quaternary structure, monomer. Homodimer. Interacts with protein B119L. Interacts with membrane protein E248R. It depends on Zn(2+) as a cofactor.

May participate in a redox cascade for the formation of disulfide bonds in viral proteins. The chain is Protein A151R from African swine fever virus (isolate Tick/Malawi/Lil 20-1/1983) (ASFV).